Consider the following 149-residue polypeptide: METLYRVPFLVLECPNLKLKKPPWVHMPSAMTVYALVVVSYFLITGGIIYDVIVEPPSVGSMTDEHGHQRPVAFLAYRVNGQYIMEGLASSFLFTMGGLGFIILDRSNAPNIPKLNRFLLLFIGFVCVLLSFFMARVFMRMKLPGYLMG.

The Cytoplasmic portion of the chain corresponds to 1–32 (METLYRVPFLVLECPNLKLKKPPWVHMPSAMT). A helical membrane pass occupies residues 33–53 (VYALVVVSYFLITGGIIYDVI). At 54 to 83 (VEPPSVGSMTDEHGHQRPVAFLAYRVNGQY) the chain is on the extracellular side. A helical transmembrane segment spans residues 84–104 (IMEGLASSFLFTMGGLGFIIL). Topologically, residues 105–117 (DRSNAPNIPKLNR) are cytoplasmic. The helical transmembrane segment at 118-138 (FLLLFIGFVCVLLSFFMARVF) threads the bilayer. Topologically, residues 139-149 (MRMKLPGYLMG) are extracellular.

This sequence belongs to the OSTC family. In terms of assembly, component of STT3A-containing oligosaccharyl transferase (OST-A) complex. STT3A-containing complex assembly occurs through the formation of 3 subcomplexes. Subcomplex 1 contains RPN1 and TMEM258, subcomplex 2 contains the STT3A-specific subunits STT3A, DC2/OSTC, and KCP2 as well as the core subunit OST4, and subcomplex 3 contains RPN2, DAD1, and OST48. The OST-A complex can form stable complexes with the Sec61 complex or with both the Sec61 and TRAP complexes. Interacts with PSEN1 and NCSTN; indicative for an association with the gamma-secretase complex.

Its subcellular location is the endoplasmic reticulum. The protein resides in the membrane. It participates in protein modification; protein glycosylation. Its function is as follows. Subunit of STT3A-containing oligosaccharyl transferase (OST-A) complex that catalyzes the initial transfer of a defined glycan (Glc(3)Man(9)GlcNAc(2) in eukaryotes) from the lipid carrier dolichol-pyrophosphate to an asparagine residue within an Asn-X-Ser/Thr consensus motif in nascent polypeptide chains, the first step in protein N-glycosylation. N-glycosylation occurs cotranslationally and the complex associates with the Sec61 complex at the channel-forming translocon complex that mediates protein translocation across the endoplasmic reticulum (ER). Within the OST-A complex, acts as an adapter that anchors the OST-A complex to the Sec61 complex. May be involved in N-glycosylation of APP (amyloid-beta precursor protein). Can modulate gamma-secretase cleavage of APP by enhancing endoprotelysis of PSEN1. This Canis lupus familiaris (Dog) protein is Oligosaccharyltransferase complex subunit OSTC.